The following is a 331-amino-acid chain: Ornithine carbamoyltransferase (331 aa).

Residues 55–58 (STRT), Gln82, Arg106, and 133–136 (HPTQ) each bind carbamoyl phosphate. L-ornithine-binding positions include Asn166, Asp230, and 234–235 (SM). Carbamoyl phosphate is bound by residues 272–273 (CL) and Arg317.

The protein belongs to the aspartate/ornithine carbamoyltransferase superfamily. OTCase family.

It is found in the cytoplasm. It catalyses the reaction carbamoyl phosphate + L-ornithine = L-citrulline + phosphate + H(+). The protein operates within amino-acid biosynthesis; L-arginine biosynthesis; L-arginine from L-ornithine and carbamoyl phosphate: step 1/3. Functionally, reversibly catalyzes the transfer of the carbamoyl group from carbamoyl phosphate (CP) to the N(epsilon) atom of ornithine (ORN) to produce L-citrulline. The chain is Ornithine carbamoyltransferase (argF) from Neisseria gonorrhoeae.